A 170-amino-acid chain; its full sequence is Adenine phosphoribosyltransferase (170 aa).

Belongs to the purine/pyrimidine phosphoribosyltransferase family. As to quaternary structure, homodimer.

It localises to the cytoplasm. The enzyme catalyses AMP + diphosphate = 5-phospho-alpha-D-ribose 1-diphosphate + adenine. The protein operates within purine metabolism; AMP biosynthesis via salvage pathway; AMP from adenine: step 1/1. Catalyzes a salvage reaction resulting in the formation of AMP, that is energically less costly than de novo synthesis. This chain is Adenine phosphoribosyltransferase, found in Fusobacterium nucleatum subsp. nucleatum (strain ATCC 25586 / DSM 15643 / BCRC 10681 / CIP 101130 / JCM 8532 / KCTC 2640 / LMG 13131 / VPI 4355).